The following is a 92-amino-acid chain: Small ribosomal subunit protein uS19 (92 aa).

Belongs to the universal ribosomal protein uS19 family.

Protein S19 forms a complex with S13 that binds strongly to the 16S ribosomal RNA. The protein is Small ribosomal subunit protein uS19 of Limosilactobacillus reuteri (strain DSM 20016) (Lactobacillus reuteri).